A 185-amino-acid polypeptide reads, in one-letter code: Large ribosomal subunit protein uL5 (185 aa).

The protein belongs to the universal ribosomal protein uL5 family. Part of the 50S ribosomal subunit; part of the 5S rRNA/L5/L18/L25 subcomplex. Contacts the 5S rRNA and the P site tRNA. Forms a bridge to the 30S subunit in the 70S ribosome.

Its function is as follows. This is one of the proteins that bind and probably mediate the attachment of the 5S RNA into the large ribosomal subunit, where it forms part of the central protuberance. In the 70S ribosome it contacts protein S13 of the 30S subunit (bridge B1b), connecting the 2 subunits; this bridge is implicated in subunit movement. Contacts the P site tRNA; the 5S rRNA and some of its associated proteins might help stabilize positioning of ribosome-bound tRNAs. The chain is Large ribosomal subunit protein uL5 from Treponema pallidum (strain Nichols).